Consider the following 359-residue polypeptide: Type-1 angiotensin II receptor (359 aa).

Residues 1–25 (MILNSSTEDGIKRIQDDCPKAGRHS) lie on the Extracellular side of the membrane. Asparagine 4 carries N-linked (GlcNAc...) asparagine glycosylation. Glutamine 15 and aspartate 17 together coordinate angiotensin II. 2 disulfide bridges follow: cysteine 18/cysteine 274 and cysteine 101/cysteine 180. A helical membrane pass occupies residues 26–55 (YIFVMIPTLYSIIFVVGIFGNSLVVIVIYF). Residues 56–61 (YMKLKT) lie on the Cytoplasmic side of the membrane. The chain crosses the membrane as a helical span at residues 62-89 (VASVFLLNLALADICFLLTLPLWAVYTA). Residues 90-98 (MEYRWPFGN) lie on the Extracellular side of the membrane. Residues 99 to 125 (YLCKIASASVSFNLYASVFLLTCLSID) form a helical membrane-spanning segment. The Cytoplasmic segment spans residues 126–141 (RYLAIVHPMKSRLRRT). Residues 142-165 (MLVAKVTCVIIWLMAGLASLPAVI) form a helical membrane-spanning segment. The Extracellular portion of the chain corresponds to 166 to 190 (HRNVFFIENTNITVCAFHYESQNST). Arginine 167 is a binding site for angiotensin II. Asparagine 176 carries an N-linked (GlcNAc...) asparagine glycan. Angiotensin II-binding residues include phenylalanine 182, histidine 183, and tyrosine 184. An N-linked (GlcNAc...) asparagine glycan is attached at asparagine 188. A helical membrane pass occupies residues 191-216 (LPIGLGLTKNILGFMFPFLIILTSYT). Residue lysine 199 participates in angiotensin II binding. At 217–239 (LIWKALKKAYEIQKNKPRNDDIF) the chain is on the cytoplasmic side. The helical transmembrane segment at 240–268 (KIIMAIVLFFFFSWVPHQIFTFLDVLIQL) threads the bilayer. Residues 269-278 (GIIHDCKISD) lie on the Extracellular side of the membrane. Residues 279-304 (IVDTAMPITICIAYFNNCLNPLFYGF) traverse the membrane as a helical segment. At 305 to 359 (LGKKFKKYFLQLLKYIPPKAKSHSTLSTKMSTLSYRPSDNVSSSAKKPVQCFEVE) the chain is on the cytoplasmic side. Residues 337–349 (LSYRPSDNVSSSA) show a composition bias toward polar residues. The tract at residues 337-359 (LSYRPSDNVSSSAKKPVQCFEVE) is disordered. Cysteine 355 is lipidated: S-palmitoyl cysteine.

It belongs to the G-protein coupled receptor 1 family. In terms of assembly, interacts with MAS1. Interacts with ARRB1. Interacts with FLNA (via filamin repeat 21); increases PKA-mediated phosphorylation of FLNA. In terms of processing, C-terminal Ser or Thr residues may be phosphorylated. Expressed in liver, kidney, adrenal gland, heart and colon.

Its subcellular location is the cell membrane. Functionally, receptor for angiotensin II, a vasoconstricting peptide, which acts as a key regulator of blood pressure and sodium retention by the kidney. The activated receptor in turn couples to G-alpha proteins G(q) (GNAQ, GNA11, GNA14 or GNA15) and thus activates phospholipase C and increases the cytosolic Ca(2+) concentrations, which in turn triggers cellular responses such as stimulation of protein kinase C. The protein is Type-1 angiotensin II receptor (AGTR1) of Cavia porcellus (Guinea pig).